A 229-amino-acid polypeptide reads, in one-letter code: Potassium/proton antiporter CemA (229 aa).

Transmembrane regions (helical) follow at residues 7-27 (FTPL…SFSF), 114-134 (LICF…LVIL), and 189-209 (ILSG…KYWI).

It belongs to the CemA family.

The protein resides in the plastid. It localises to the chloroplast inner membrane. The enzyme catalyses K(+)(in) + H(+)(out) = K(+)(out) + H(+)(in). Its function is as follows. Contributes to K(+)/H(+) antiport activity by supporting proton efflux to control proton extrusion and homeostasis in chloroplasts in a light-dependent manner to modulate photosynthesis. Prevents excessive induction of non-photochemical quenching (NPQ) under continuous-light conditions. Indirectly promotes efficient inorganic carbon uptake into chloroplasts. In Ipomoea purpurea (Common morning glory), this protein is Potassium/proton antiporter CemA.